The chain runs to 654 residues: Probable potassium transport system protein Kup (654 aa).

Helical transmembrane passes span 17 to 37 (GILVTLGIIYGDIGTSPLYVM), 40 to 60 (IIGLHTIKPEVVLGGISAIFW), 71 to 91 (VLITLSADNHGEGGIFALYAL), 99 to 119 (WLIIPAIIGGSALLADGIITP), 137 to 157 (INTVPIVIAILVVLFTIQQFG), 164 to 184 (FFAPMMMIWFAMLAILGILQI), 202 to 222 (LLSIHPDGFYVLGFVFLCTTG), 240 to 260 (ISWIFVKIALLLNYFGQGAYL), 281 to 301 (LVMPEWFQPFGIVISTMAAVI), 338 to 358 (IYIPSINWLLLAGCIGIVLHF), 369 to 389 (GLAIVLCMIMTTILLTYFMIL), 394 to 414 (WFIIAPLILLYLVIEFSFLIA), and 423 to 443 (GYVTLIIASALTFIMSIWYTA).

This sequence belongs to the HAK/KUP transporter (TC 2.A.72) family.

Its subcellular location is the cell inner membrane. It carries out the reaction K(+)(in) + H(+)(in) = K(+)(out) + H(+)(out). Transport of potassium into the cell. Likely operates as a K(+):H(+) symporter. In Flavobacterium psychrophilum (strain ATCC 49511 / DSM 21280 / CIP 103535 / JIP02/86), this protein is Probable potassium transport system protein Kup.